Here is a 750-residue protein sequence, read N- to C-terminus: uncharacterized protein (750 aa).

This is an uncharacterized protein from Escherichia coli (strain K12).